The sequence spans 406 residues: Putative odorant receptor 65b (406 aa).

Topologically, residues 1-55 are cytoplasmic; the sequence is MDIQRFLKFYKVGWKTYRDPLMEASHSSIYYWREQMKAMALFTTTEERLLPYRSK. The chain crosses the membrane as a helical span at residues 56-76; it reads WHTLVYIQMVIFFASMSFGLT. The Extracellular portion of the chain corresponds to 77-88; sequence ESMGDHVQMGRD. A helical transmembrane segment spans residues 89-109; that stretch reads LAFILGAFFIIFKTYYFCWYG. The Cytoplasmic segment spans residues 110–144; that stretch reads DELDQVISDLDALHPWAQKGPNPVEYQTGKRWYFV. The helical transmembrane segment at 145-165 threads the bilayer; sequence MAFFLATSWSFFLCILLLLLI. At 166-218 the chain is on the extracellular side; sequence TSPMWVHQQNLPFHAAFPFQWHEKSLHPISHAIIYLFQSYFAVYCLTWLLCIE. Residues 219 to 239 traverse the membrane as a helical segment; sequence GLSICIYAEITFGIEVLCLEL. Over 240–275 the chain is Cytoplasmic; that stretch reads RQIHRHNYGLQELRMETNRLVKLHQKIVEILDRTND. A helical transmembrane segment spans residues 276–296; that stretch reads VFHGTLIMQMGVNFSLVSLSV. Residues 297-307 lie on the Extracellular side of the membrane; sequence LEAVEARKDPK. Residues 308–328 traverse the membrane as a helical segment; the sequence is VVAQFAVLMLLALGHLSMWSY. Residues 329–381 lie on the Cytoplasmic side of the membrane; that stretch reads CGDQLSQKSLQISEAAYEAYDPTKGSKDVYRDLCVIIRRGQDPLIMRASPFPS. A helical transmembrane segment spans residues 382 to 402; that stretch reads FNLINYSAILNQCYGILTFLL. Residues 403 to 406 are Extracellular-facing; it reads KTLD.

The protein belongs to the insect chemoreceptor superfamily. Heteromeric odorant receptor channel (TC 1.A.69) family. Or49a subfamily. As to quaternary structure, interacts with Orco. Complexes exist early in the endomembrane system in olfactory sensory neurons (OSNs), coupling these complexes to the conserved ciliary trafficking pathway.

The protein resides in the cell membrane. Functionally, odorant receptor which mediates acceptance or avoidance behavior, depending on its substrates. The odorant receptor repertoire encodes a large collection of odor stimuli that vary widely in identity, intensity, and duration. May form a complex with Orco to form odorant-sensing units, providing sensitive and prolonged odorant signaling and calcium permeability. This chain is Putative odorant receptor 65b (Or65b), found in Drosophila melanogaster (Fruit fly).